A 397-amino-acid polypeptide reads, in one-letter code: Phosphoglycerate kinase (397 aa).

Residues 21 to 23 (DFN), Arg-36, 59 to 62 (HCGR), Arg-118, and Arg-151 each bind substrate. Residues Lys-201, Glu-323, and 353 to 356 (GGDT) each bind ATP.

The protein belongs to the phosphoglycerate kinase family. In terms of assembly, monomer.

The protein localises to the cytoplasm. The enzyme catalyses (2R)-3-phosphoglycerate + ATP = (2R)-3-phospho-glyceroyl phosphate + ADP. It functions in the pathway carbohydrate degradation; glycolysis; pyruvate from D-glyceraldehyde 3-phosphate: step 2/5. The polypeptide is Phosphoglycerate kinase (Bartonella henselae (strain ATCC 49882 / DSM 28221 / CCUG 30454 / Houston 1) (Rochalimaea henselae)).